Here is a 129-residue protein sequence, read N- to C-terminus: Azurin iso-2 (129 aa).

One can recognise a Plastocyanin-like domain in the interval 1–129 (ASCETTVTSG…MMRGTLKLEE (129 aa)). C3 and C26 are joined by a disulfide. 4 residues coordinate Cu cation: H46, C112, H117, and M121.

The protein localises to the periplasm. Functionally, this methylothroph organism uses azurin in the oxidation of methylamine. Iso-2 is probably the acceptor of electrons from methylamine dehydrogenase. The polypeptide is Azurin iso-2 (Methylomonas sp. (strain J)).